Consider the following 377-residue polypeptide: Queuine tRNA-ribosyltransferase (377 aa).

Aspartate 89 (proton acceptor) is an active-site residue. Residues aspartate 89 to phenylalanine 93, aspartate 143, glutamine 188, and glycine 215 contribute to the substrate site. Residues glycine 246–aspartate 252 form an RNA binding region. Aspartate 265 acts as the Nucleophile in catalysis. Residues threonine 270–arginine 274 form an RNA binding; important for wobble base 34 recognition region. Zn(2+)-binding residues include cysteine 303, cysteine 305, cysteine 308, and histidine 334.

Belongs to the queuine tRNA-ribosyltransferase family. In terms of assembly, homodimer. Within each dimer, one monomer is responsible for RNA recognition and catalysis, while the other monomer binds to the replacement base PreQ1. The cofactor is Zn(2+).

The catalysed reaction is 7-aminomethyl-7-carbaguanine + guanosine(34) in tRNA = 7-aminomethyl-7-carbaguanosine(34) in tRNA + guanine. It functions in the pathway tRNA modification; tRNA-queuosine biosynthesis. Functionally, catalyzes the base-exchange of a guanine (G) residue with the queuine precursor 7-aminomethyl-7-deazaguanine (PreQ1) at position 34 (anticodon wobble position) in tRNAs with GU(N) anticodons (tRNA-Asp, -Asn, -His and -Tyr). Catalysis occurs through a double-displacement mechanism. The nucleophile active site attacks the C1' of nucleotide 34 to detach the guanine base from the RNA, forming a covalent enzyme-RNA intermediate. The proton acceptor active site deprotonates the incoming PreQ1, allowing a nucleophilic attack on the C1' of the ribose to form the product. After dissociation, two additional enzymatic reactions on the tRNA convert PreQ1 to queuine (Q), resulting in the hypermodified nucleoside queuosine (7-(((4,5-cis-dihydroxy-2-cyclopenten-1-yl)amino)methyl)-7-deazaguanosine). The chain is Queuine tRNA-ribosyltransferase from Acinetobacter baumannii (strain SDF).